Reading from the N-terminus, the 459-residue chain is Putrescine aminotransferase (459 aa).

Residues 150 to 151 and Q274 each bind pyridoxal 5'-phosphate; that span reads GT. K300 is subject to N6-(pyridoxal phosphate)lysine. T332 contacts pyridoxal 5'-phosphate.

This sequence belongs to the class-III pyridoxal-phosphate-dependent aminotransferase family. Putrescine aminotransferase subfamily. The cofactor is pyridoxal 5'-phosphate.

The enzyme catalyses an alkane-alpha,omega-diamine + 2-oxoglutarate = an omega-aminoaldehyde + L-glutamate. It catalyses the reaction putrescine + 2-oxoglutarate = 1-pyrroline + L-glutamate + H2O. The catalysed reaction is cadaverine + 2-oxoglutarate = 5-aminopentanal + L-glutamate. It functions in the pathway amine and polyamine degradation; putrescine degradation; 4-aminobutanal from putrescine (transaminase route): step 1/1. Catalyzes the aminotransferase reaction from putrescine to 2-oxoglutarate, leading to glutamate and 4-aminobutanal, which spontaneously cyclizes to form 1-pyrroline. This is the first step in one of two pathways for putrescine degradation, where putrescine is converted into 4-aminobutanoate (gamma-aminobutyrate or GABA) via 4-aminobutanal. Also functions as a cadaverine transaminase in a a L-lysine degradation pathway to succinate that proceeds via cadaverine, glutarate and L-2-hydroxyglutarate. The protein is Putrescine aminotransferase of Escherichia coli O6:K15:H31 (strain 536 / UPEC).